A 176-amino-acid chain; its full sequence is Interleukin-20 (176 aa).

An N-terminal signal peptide occupies residues 1–24 (MKGFGLAFGLFSAVGFLLWTPLTG). 3 disulfides stabilise this stretch: Cys33-Cys126, Cys80-Cys132, and Cys81-Cys134.

This sequence belongs to the IL-10 family. In terms of assembly, forms a 1:1:1 heterotrimeric complex with its primary high-affinity heterodimeric receptor IL20RA/IL20RB.

It localises to the secreted. Pro-inflammatory and angiogenic cytokine mainly secreted by monocytes and skin keratinocytes that plays crucial roles in immune responses, regulation of inflammatory responses, hemopoiesis, as well as epidermal cell and keratinocyte differentiation. Enhances tissue remodeling and wound-healing activities and restores the homeostasis of epithelial layers during infection and inflammatory responses to maintain tissue integrity. Affects multiple actin-mediated functions in activated neutrophils leading to inhibition of phagocytosis, granule exocytosis, and migration. Exert its effects via the type I IL-20 receptor complex consisting of IL20RA and IL20RB. Alternatively, can mediate its activity through a second receptor complex called type II IL-20 receptor complex composed of IL22RA1 and IL20RB. Acts as an arteriogenic and vascular remodeling factory by activating a range of signaling processes including phosphorylations of JAK2 and STAT5 as well as activation of the serine and threonine kinases AKT and ERK1/2. Alternatively, can activate STAT3 phosphorylation and transcriptional activity in a JAK2, ERK1/2 and p38 MAPK-dependent manner in keratinocytes. In Mus musculus (Mouse), this protein is Interleukin-20 (Il20).